Here is a 194-residue protein sequence, read N- to C-terminus: Imidazoleglycerol-phosphate dehydratase (194 aa).

It belongs to the imidazoleglycerol-phosphate dehydratase family.

Its subcellular location is the cytoplasm. The enzyme catalyses D-erythro-1-(imidazol-4-yl)glycerol 3-phosphate = 3-(imidazol-4-yl)-2-oxopropyl phosphate + H2O. It participates in amino-acid biosynthesis; L-histidine biosynthesis; L-histidine from 5-phospho-alpha-D-ribose 1-diphosphate: step 6/9. This chain is Imidazoleglycerol-phosphate dehydratase, found in Chloroherpeton thalassium (strain ATCC 35110 / GB-78).